The chain runs to 84 residues: PAMP-induced secreted peptide 2 (84 aa).

A signal peptide spans 1 to 24 (MMMNKNVLSSILFFMLIGSVLVES). The interval 50–84 (KDSGPSPGEGHKVVDRKDTFRFVKHSGPSPSGPGH) is disordered. Over residues 58–70 (EGHKVVDRKDTFR) the composition is skewed to basic and acidic residues. 4-hydroxyproline is present on residues Pro77 and Pro79.

In terms of processing, contains 4-hydroxyproline; hydroxylated on Pro-77 and Pro-79.

The protein localises to the secreted. It localises to the extracellular space. It is found in the apoplast. Functionally, endogenous secreted peptide that acts as elicitor of immune response and positive regulator of defense response. Amplifies the immune response triggered by flg22, the active epitope of bacterial flagellin. Acts as a negative regulator of root growth. In Arabidopsis thaliana (Mouse-ear cress), this protein is PAMP-induced secreted peptide 2.